The following is a 556-amino-acid chain: Glucose-6-phosphate isomerase (556 aa).

The Proton donor role is filled by glutamate 363. Residues histidine 394 and lysine 522 contribute to the active site.

It belongs to the GPI family.

The protein localises to the cytoplasm. The enzyme catalyses alpha-D-glucose 6-phosphate = beta-D-fructose 6-phosphate. The protein operates within carbohydrate biosynthesis; gluconeogenesis. It functions in the pathway carbohydrate degradation; glycolysis; D-glyceraldehyde 3-phosphate and glycerone phosphate from D-glucose: step 2/4. Functionally, catalyzes the reversible isomerization of glucose-6-phosphate to fructose-6-phosphate. This is Glucose-6-phosphate isomerase from Frankia casuarinae (strain DSM 45818 / CECT 9043 / HFP020203 / CcI3).